The sequence spans 265 residues: Orotidine 5'-phosphate decarboxylase (265 aa).

Substrate-binding positions include aspartate 37, 59–61, 91–100, tyrosine 217, and arginine 235; these read KTH and DRKFADIGNT. Lysine 93 serves as the catalytic Proton donor.

This sequence belongs to the OMP decarboxylase family.

It carries out the reaction orotidine 5'-phosphate + H(+) = UMP + CO2. It functions in the pathway pyrimidine metabolism; UMP biosynthesis via de novo pathway; UMP from orotate: step 2/2. This chain is Orotidine 5'-phosphate decarboxylase (URA3), found in Diutina rugosa (Yeast).